Here is a 406-residue protein sequence, read N- to C-terminus: COP9 signalosome complex subunit 4 (406 aa).

The region spanning 197–366 (YRRKFIEAAQ…GIVHFETREP (170 aa)) is the PCI domain.

The protein belongs to the CSN4 family. As to quaternary structure, component of the CSN complex, probably composed of cops1, cops2, cops3, cops4, cops5, cops6, cops7, cops8 and cops9.

It localises to the cytoplasm. It is found in the nucleus. Its subcellular location is the cytoplasmic vesicle. The protein resides in the secretory vesicle. The protein localises to the synaptic vesicle. Functionally, component of the COP9 signalosome complex (CSN), a complex involved in various cellular and developmental processes. The CSN complex is an essential regulator of the ubiquitin (Ubl) conjugation pathway by mediating the deneddylation of the cullin subunits of E3 ligase complexes, leading to modify the Ubl ligase activity. The sequence is that of COP9 signalosome complex subunit 4 (cops4) from Danio rerio (Zebrafish).